Here is a 254-residue protein sequence, read N- to C-terminus: 4-hydroxy-tetrahydrodipicolinate reductase (254 aa).

Residue Gly8–Met13 coordinates NAD(+). Lys36 lines the NADP(+) pocket. NAD(+)-binding positions include Gly89–Thr91 and Ser115–Tyr118. Catalysis depends on His147, which acts as the Proton donor/acceptor. His148 contributes to the (S)-2,3,4,5-tetrahydrodipicolinate binding site. The active-site Proton donor is Lys151. (S)-2,3,4,5-tetrahydrodipicolinate is bound at residue Gly157–Thr158.

It belongs to the DapB family.

It localises to the cytoplasm. It catalyses the reaction (S)-2,3,4,5-tetrahydrodipicolinate + NAD(+) + H2O = (2S,4S)-4-hydroxy-2,3,4,5-tetrahydrodipicolinate + NADH + H(+). The catalysed reaction is (S)-2,3,4,5-tetrahydrodipicolinate + NADP(+) + H2O = (2S,4S)-4-hydroxy-2,3,4,5-tetrahydrodipicolinate + NADPH + H(+). It participates in amino-acid biosynthesis; L-lysine biosynthesis via DAP pathway; (S)-tetrahydrodipicolinate from L-aspartate: step 4/4. Catalyzes the conversion of 4-hydroxy-tetrahydrodipicolinate (HTPA) to tetrahydrodipicolinate. The polypeptide is 4-hydroxy-tetrahydrodipicolinate reductase (Methanospirillum hungatei JF-1 (strain ATCC 27890 / DSM 864 / NBRC 100397 / JF-1)).